A 510-amino-acid chain; its full sequence is Probable cytochrome P450 312a1 (510 aa).

A heme-binding site is contributed by C455.

The protein belongs to the cytochrome P450 family. The cofactor is heme.

It localises to the endoplasmic reticulum membrane. The protein localises to the microsome membrane. Functionally, may be involved in the metabolism of insect hormones and in the breakdown of synthetic insecticides. The chain is Probable cytochrome P450 312a1 (Cyp312a1) from Drosophila melanogaster (Fruit fly).